The chain runs to 366 residues: tRNA 2-selenouridine synthase (366 aa).

Positions 12–135 (FLNDVPMMDA…MRTFLLDTLH (124 aa)) constitute a Rhodanese domain. The active-site S-selanylcysteine intermediate is the Cys-95.

Belongs to the SelU family. As to quaternary structure, monomer.

The enzyme catalyses 5-methylaminomethyl-2-thiouridine(34) in tRNA + selenophosphate + (2E)-geranyl diphosphate + H2O + H(+) = 5-methylaminomethyl-2-selenouridine(34) in tRNA + (2E)-thiogeraniol + phosphate + diphosphate. The catalysed reaction is 5-methylaminomethyl-2-thiouridine(34) in tRNA + (2E)-geranyl diphosphate = 5-methylaminomethyl-S-(2E)-geranyl-thiouridine(34) in tRNA + diphosphate. It catalyses the reaction 5-methylaminomethyl-S-(2E)-geranyl-thiouridine(34) in tRNA + selenophosphate + H(+) = 5-methylaminomethyl-2-(Se-phospho)selenouridine(34) in tRNA + (2E)-thiogeraniol. It carries out the reaction 5-methylaminomethyl-2-(Se-phospho)selenouridine(34) in tRNA + H2O = 5-methylaminomethyl-2-selenouridine(34) in tRNA + phosphate. Functionally, involved in the post-transcriptional modification of the uridine at the wobble position (U34) of tRNA(Lys), tRNA(Glu) and tRNA(Gln). Catalyzes the conversion of 2-thiouridine (S2U-RNA) to 2-selenouridine (Se2U-RNA). Acts in a two-step process involving geranylation of 2-thiouridine (S2U) to S-geranyl-2-thiouridine (geS2U) and subsequent selenation of the latter derivative to 2-selenouridine (Se2U) in the tRNA chain. The chain is tRNA 2-selenouridine synthase from Pseudomonas syringae pv. tomato (strain ATCC BAA-871 / DC3000).